The sequence spans 184 residues: Ribosome-recycling factor (184 aa).

The tract at residues 141-165 (DEKNGDITEDDLRSQTDDVQKATDN) is disordered.

It belongs to the RRF family.

The protein resides in the cytoplasm. In terms of biological role, responsible for the release of ribosomes from messenger RNA at the termination of protein biosynthesis. May increase the efficiency of translation by recycling ribosomes from one round of translation to another. This Staphylococcus epidermidis (strain ATCC 35984 / DSM 28319 / BCRC 17069 / CCUG 31568 / BM 3577 / RP62A) protein is Ribosome-recycling factor.